Reading from the N-terminus, the 475-residue chain is Ribulose bisphosphate carboxylase large chain (475 aa).

The propeptide occupies 1–2 (MA). Residue P3 is modified to N-acetylproline. K14 is subject to N6,N6,N6-trimethyllysine. Residues N123 and T173 each contribute to the substrate site. The Proton acceptor role is filled by K175. K177 is a binding site for substrate. Mg(2+) contacts are provided by K201, D203, and E204. K201 bears the N6-carboxylysine mark. The Proton acceptor role is filled by H294. Residues R295, H327, and S379 each coordinate substrate.

This sequence belongs to the RuBisCO large chain family. Type I subfamily. Heterohexadecamer of 8 large chains and 8 small chains; disulfide-linked. The disulfide link is formed within the large subunit homodimers. The cofactor is Mg(2+). The disulfide bond which can form in the large chain dimeric partners within the hexadecamer appears to be associated with oxidative stress and protein turnover.

It localises to the plastid. Its subcellular location is the chloroplast. It carries out the reaction 2 (2R)-3-phosphoglycerate + 2 H(+) = D-ribulose 1,5-bisphosphate + CO2 + H2O. The catalysed reaction is D-ribulose 1,5-bisphosphate + O2 = 2-phosphoglycolate + (2R)-3-phosphoglycerate + 2 H(+). Functionally, ruBisCO catalyzes two reactions: the carboxylation of D-ribulose 1,5-bisphosphate, the primary event in carbon dioxide fixation, as well as the oxidative fragmentation of the pentose substrate in the photorespiration process. Both reactions occur simultaneously and in competition at the same active site. The chain is Ribulose bisphosphate carboxylase large chain from Bryopsis maxima (Green alga).